The following is a 2216-amino-acid chain: Protein Ycf2 (2216 aa).

1567-1574 (GSIGTGRS) provides a ligand contact to ATP.

Belongs to the Ycf2 family.

The protein localises to the plastid stroma. In terms of biological role, probable ATPase of unknown function. Its presence in a non-photosynthetic plant (Epifagus virginiana) and experiments in tobacco indicate that it has an essential function which is probably not related to photosynthesis. The sequence is that of Protein Ycf2 from Epifagus virginiana (Beechdrops).